Here is a 125-residue protein sequence, read N- to C-terminus: Large ribosomal subunit protein bL19 (125 aa).

It belongs to the bacterial ribosomal protein bL19 family.

Functionally, this protein is located at the 30S-50S ribosomal subunit interface and may play a role in the structure and function of the aminoacyl-tRNA binding site. The sequence is that of Large ribosomal subunit protein bL19 from Wolbachia sp. subsp. Brugia malayi (strain TRS).